A 503-amino-acid polypeptide reads, in one-letter code: SusD-like protein P38 (503 aa).

The signal sequence occupies residues Met-1–Asn-21.

This sequence belongs to the SusD family.

The protein localises to the cell outer membrane. In terms of biological role, polysaccharide-binding protein probably involved in ulvan degradation. Ulvan is the main polysaccharide component of the Ulvales (green seaweed) cell wall. It is composed of disaccharide building blocks comprising 3-sulfated rhamnose (Rha3S) linked to D-glucuronic acid (GlcA), L-iduronic acid (IduA), or D-xylose (Xyl). The SusD-like protein may mediate ulvan oligomer-binding before transport in the periplasm for further degradation. The sequence is that of SusD-like protein P38 from Formosa agariphila (strain DSM 15362 / KCTC 12365 / LMG 23005 / KMM 3901 / M-2Alg 35-1).